A 271-amino-acid polypeptide reads, in one-letter code: RELT-like protein 1 (271 aa).

The signal sequence occupies residues 1 to 23 (MAPRGLPGSAVLAAAVFVGGAVS). The Extracellular segment spans residues 24-57 (SPLVRSDHSGSHPLPSKTETTPSPTNNNGNGHPE). Residues 27–52 (VRSDHSGSHPLPSKTETTPSPTNNNG) are disordered. Residues 36 to 52 (PLPSKTETTPSPTNNNG) show a composition bias toward low complexity. A helical transmembrane segment spans residues 58 to 78 (YIAYALVPVFFVMGLFGVLIC). Over 79 to 271 (HLLKKKGYRC…PVKRQQSDSE (193 aa)) the chain is Cytoplasmic. 2 positions are modified to phosphoserine: Ser109 and Ser114. 2 disordered regions span residues 144-168 (CDPE…LSPG) and 231-271 (TKVE…SDSE). Pro residues predominate over residues 155 to 165 (PGSPPVSPGPL). Residues 231–244 (TKVEPKSNQKERRS) show a composition bias toward basic and acidic residues. Phosphoserine occurs at positions 244 and 247.

The protein belongs to the RELT family. As to quaternary structure, interacts with RELT, RELL2, OXSR1 and PLSCR1.

The protein localises to the cell membrane. Functionally, induces activation of MAPK14/p38 cascade, when overexpressed. Induces apoptosis, when overexpressed. This Bos taurus (Bovine) protein is RELT-like protein 1 (RELL1).